Consider the following 368-residue polypeptide: MGVYLSTPKTEKLSEDGENDKLKFGLSSMQGWRATMEDAHSALLDIDNDTSFFGVFDGHGGRVVAKFCAKYLHREVLRSEAYSAGDLGNAAHKAFFRMDEMMRGQRGWRELQALGDKINQISGMIEGLIWSPRGSDSNDQHDDWAFEEGPHSDFAGPTCGSTACVAIVRNSQLVVANAGDSRCVISRNGQAYNLSRDHKPELEAERERILKAGGYIQMGRVNGTINLSRAIGDIEFKQNKFLSPDKQMLTANPDINTVELCDDDDFLVLACDGIWDCMSSQQLVDFIHEHINTESSLSAVCERVLDRCLAPSTLGGEGCDNMTMILVQFKKPISQNKNVSPAEQSAADKQPTGDTHWSEIHVTEESSS.

A PPM-type phosphatase domain is found at 23–329 (KFGLSSMQGW…DNMTMILVQF (307 aa)). 4 residues coordinate Mn(2+): D57, G58, D272, and D320. Residues 336–368 (NKNVSPAEQSAADKQPTGDTHWSEIHVTEESSS) are disordered. Positions 356 to 368 (HWSEIHVTEESSS) are enriched in basic and acidic residues.

It belongs to the PP2C family. It depends on Mg(2+) as a cofactor. Mn(2+) is required as a cofactor.

It carries out the reaction O-phospho-L-seryl-[protein] + H2O = L-seryl-[protein] + phosphate. The enzyme catalyses O-phospho-L-threonyl-[protein] + H2O = L-threonyl-[protein] + phosphate. The protein is Probable protein phosphatase 2C 58 of Oryza sativa subsp. japonica (Rice).